A 333-amino-acid chain; its full sequence is Tubulin alpha chain (333 aa).

GTP is bound by residues Ser-48, Gly-52, Thr-53, Thr-88, Asn-115, and Asn-137.

It belongs to the tubulin family. As to quaternary structure, dimer of alpha and beta chains. A typical microtubule is a hollow water-filled tube with an outer diameter of 25 nm and an inner diameter of 15 nM. Alpha-beta heterodimers associate head-to-tail to form protofilaments running lengthwise along the microtubule wall with the beta-tubulin subunit facing the microtubule plus end conferring a structural polarity. Microtubules usually have 13 protofilaments but different protofilament numbers can be found in some organisms and specialized cells. Mg(2+) serves as cofactor. In terms of processing, undergoes a tyrosination/detyrosination cycle, the cyclic removal and re-addition of a C-terminal tyrosine residue by the enzymes tubulin tyrosine carboxypeptidase (TTCP) and tubulin tyrosine ligase (TTL), respectively.

Its subcellular location is the cytoplasm. The protein localises to the cytoskeleton. It carries out the reaction GTP + H2O = GDP + phosphate + H(+). In terms of biological role, tubulin is the major constituent of microtubules, a cylinder consisting of laterally associated linear protofilaments composed of alpha- and beta-tubulin heterodimers. Microtubules grow by the addition of GTP-tubulin dimers to the microtubule end, where a stabilizing cap forms. Below the cap, tubulin dimers are in GDP-bound state, owing to GTPase activity of alpha-tubulin. This is Tubulin alpha chain (tuba) from Dictyostelium purpureum (Slime mold).